The chain runs to 196 residues: UPF0301 protein BT_1078 (196 aa).

Belongs to the UPF0301 (AlgH) family.

The chain is UPF0301 protein BT_1078 from Bacteroides thetaiotaomicron (strain ATCC 29148 / DSM 2079 / JCM 5827 / CCUG 10774 / NCTC 10582 / VPI-5482 / E50).